Consider the following 88-residue polypeptide: Small ribosomal subunit protein uS17 (88 aa).

The protein belongs to the universal ribosomal protein uS17 family. Part of the 30S ribosomal subunit.

One of the primary rRNA binding proteins, it binds specifically to the 5'-end of 16S ribosomal RNA. The chain is Small ribosomal subunit protein uS17 from Teredinibacter turnerae (strain ATCC 39867 / T7901).